Here is a 318-residue protein sequence, read N- to C-terminus: Probable cell division protein WhiA (318 aa).

The H-T-H motif DNA-binding region spans 281 to 314 (SLKELGQMLVPPVGKSGVNHRLRKIEEISKKLKE).

This sequence belongs to the WhiA family.

Its function is as follows. Involved in cell division and chromosome segregation. This Thermoanaerobacter sp. (strain X514) protein is Probable cell division protein WhiA.